We begin with the raw amino-acid sequence, 377 residues long: DNA-directed RNA polymerase subunit alpha (377 aa).

Residues 1–259 (MSDSSHNLLY…KHFSVFEKMD (259 aa)) are alpha N-terminal domain (alpha-NTD). The alpha C-terminal domain (alpha-CTD) stretch occupies residues 276 to 377 (KDDILHKLVL…KIRSSKNTKG (102 aa)).

It belongs to the RNA polymerase alpha chain family. In terms of assembly, homodimer. The RNAP catalytic core consists of 2 alpha, 1 beta, 1 beta' and 1 omega subunit. When a sigma factor is associated with the core the holoenzyme is formed, which can initiate transcription.

It carries out the reaction RNA(n) + a ribonucleoside 5'-triphosphate = RNA(n+1) + diphosphate. Its function is as follows. DNA-dependent RNA polymerase catalyzes the transcription of DNA into RNA using the four ribonucleoside triphosphates as substrates. In Chlamydia trachomatis serovar D (strain ATCC VR-885 / DSM 19411 / UW-3/Cx), this protein is DNA-directed RNA polymerase subunit alpha.